An 801-amino-acid polypeptide reads, in one-letter code: Phenylalanine--tRNA ligase beta subunit (801 aa).

Positions 39–154 constitute a tRNA-binding domain; that stretch reads LKMPQKVVVG…GHLELGVELG (116 aa). One can recognise a B5 domain in the interval 398 to 475; sequence IDEITIKTTF…RIYGIDNVSS (78 aa). Residues Asp453, Asp459, Glu462, and Glu463 each contribute to the Mg(2+) site. The FDX-ACB domain maps to 708 to 800; it reads SKYQKSTRDL…LVREFDAVLR (93 aa).

It belongs to the phenylalanyl-tRNA synthetase beta subunit family. Type 1 subfamily. Tetramer of two alpha and two beta subunits. Requires Mg(2+) as cofactor.

The protein resides in the cytoplasm. The catalysed reaction is tRNA(Phe) + L-phenylalanine + ATP = L-phenylalanyl-tRNA(Phe) + AMP + diphosphate + H(+). This Helicobacter hepaticus (strain ATCC 51449 / 3B1) protein is Phenylalanine--tRNA ligase beta subunit.